The chain runs to 277 residues: Large ribosomal subunit protein uL2 (277 aa).

The interval Gly222 to Asp265 is disordered.

It belongs to the universal ribosomal protein uL2 family. As to quaternary structure, part of the 50S ribosomal subunit. Forms a bridge to the 30S subunit in the 70S ribosome.

Functionally, one of the primary rRNA binding proteins. Required for association of the 30S and 50S subunits to form the 70S ribosome, for tRNA binding and peptide bond formation. It has been suggested to have peptidyltransferase activity; this is somewhat controversial. Makes several contacts with the 16S rRNA in the 70S ribosome. This Bradyrhizobium sp. (strain BTAi1 / ATCC BAA-1182) protein is Large ribosomal subunit protein uL2.